Here is a 406-residue protein sequence, read N- to C-terminus: Purine nucleoside permease (406 aa).

The N-terminal stretch at 1 to 22 (MKLSTLFTLATTISTLTTFTIA) is a signal peptide.

This sequence belongs to the NUP family.

Its activity is regulated as follows. Mammalian nucleoside transport inhibitors dipyridamole and NBMPR inhibit adenosine transport by NUP. Functionally, nucleoside permease that transports adenosine and guanosine. Does not show any transport activities towards cytidine, adenine, guanine, uridine, and uracil. The sequence is that of Purine nucleoside permease from Candida albicans (Yeast).